A 954-amino-acid chain; its full sequence is Valine--tRNA ligase (954 aa).

Positions 48–58 match the 'HIGH' region motif; the sequence is PNVTGSLHMGH. Residues 560–564 carry the 'KMSKS' region motif; the sequence is KMSKS. Lys-563 is an ATP binding site. A coiled-coil region spans residues 883–953; that stretch reads AGFINKEAEL…IQEQYKAIEA (71 aa).

This sequence belongs to the class-I aminoacyl-tRNA synthetase family. ValS type 1 subfamily. Monomer.

It is found in the cytoplasm. It catalyses the reaction tRNA(Val) + L-valine + ATP = L-valyl-tRNA(Val) + AMP + diphosphate. Functionally, catalyzes the attachment of valine to tRNA(Val). As ValRS can inadvertently accommodate and process structurally similar amino acids such as threonine, to avoid such errors, it has a 'posttransfer' editing activity that hydrolyzes mischarged Thr-tRNA(Val) in a tRNA-dependent manner. The protein is Valine--tRNA ligase of Haemophilus influenzae (strain PittEE).